Here is a 560-residue protein sequence, read N- to C-terminus: Dihydroxy-acid dehydratase (560 aa).

D80 contributes to the Mg(2+) binding site. C121 serves as a coordination point for [2Fe-2S] cluster. Mg(2+) is bound by residues D122 and K123. K123 carries the post-translational modification N6-carboxylysine. Residue C194 coordinates [2Fe-2S] cluster. Mg(2+) is bound at residue E447. S473 functions as the Proton acceptor in the catalytic mechanism.

The protein belongs to the IlvD/Edd family. Homodimer. Requires [2Fe-2S] cluster as cofactor. It depends on Mg(2+) as a cofactor.

The catalysed reaction is (2R)-2,3-dihydroxy-3-methylbutanoate = 3-methyl-2-oxobutanoate + H2O. The enzyme catalyses (2R,3R)-2,3-dihydroxy-3-methylpentanoate = (S)-3-methyl-2-oxopentanoate + H2O. Its pathway is amino-acid biosynthesis; L-isoleucine biosynthesis; L-isoleucine from 2-oxobutanoate: step 3/4. It participates in amino-acid biosynthesis; L-valine biosynthesis; L-valine from pyruvate: step 3/4. In terms of biological role, functions in the biosynthesis of branched-chain amino acids. Catalyzes the dehydration of (2R,3R)-2,3-dihydroxy-3-methylpentanoate (2,3-dihydroxy-3-methylvalerate) into 2-oxo-3-methylpentanoate (2-oxo-3-methylvalerate) and of (2R)-2,3-dihydroxy-3-methylbutanoate (2,3-dihydroxyisovalerate) into 2-oxo-3-methylbutanoate (2-oxoisovalerate), the penultimate precursor to L-isoleucine and L-valine, respectively. This chain is Dihydroxy-acid dehydratase, found in Chlorobaculum parvum (strain DSM 263 / NCIMB 8327) (Chlorobium vibrioforme subsp. thiosulfatophilum).